We begin with the raw amino-acid sequence, 168 residues long: ADP-ribosylation factor-like protein 2-binding protein (168 aa).

It belongs to the ARL2BP family.

It localises to the cytoplasm. Its subcellular location is the mitochondrion intermembrane space. The protein localises to the cytoskeleton. It is found in the microtubule organizing center. The protein resides in the centrosome. It localises to the nucleus. Its subcellular location is the spindle. The protein localises to the cilium basal body. Plays a role as an effector of the ADP-ribosylation factor-like protein 2, ARL2. The protein is ADP-ribosylation factor-like protein 2-binding protein (arl2bp) of Danio rerio (Zebrafish).